Consider the following 251-residue polypeptide: L-ascorbate peroxidase 2, cytosolic (251 aa).

The Proton acceptor role is filled by H43. H163 provides a ligand contact to heme b. K(+)-binding residues include T164, T180, N182, I185, and D187.

The protein belongs to the peroxidase family. Ascorbate peroxidase subfamily. Heme b is required as a cofactor. Detected in bundle sheath cells, the photosynthetic cells that surround the phloem and xylem.

It localises to the cytoplasm. It carries out the reaction L-ascorbate + H2O2 = L-dehydroascorbate + 2 H2O. Its function is as follows. Plays a key role in hydrogen peroxide removal. This chain is L-ascorbate peroxidase 2, cytosolic, found in Arabidopsis thaliana (Mouse-ear cress).